A 243-amino-acid polypeptide reads, in one-letter code: Adenylate kinase 4 (243 aa).

Gly40 to Thr45 is an ATP binding site. Residues Ala60–Val89 are NMP. AMP contacts are provided by residues Thr61, Arg66, Glu87–Val89, Gly115–Arg118, and Gln122. Residues Gly156–Asp193 form an LID region. Position 157 (Arg157) interacts with ATP. AMP is bound by residues Arg190 and Arg201.

The protein belongs to the adenylate kinase family.

It localises to the cytoplasm. The catalysed reaction is AMP + ATP = 2 ADP. Functionally, catalyzes the reversible transfer of the terminal phosphate group between ATP and AMP. Plays an important role in cellular energy homeostasis and in adenine nucleotide metabolism. The chain is Adenylate kinase 4 (ADK-B) from Oryza sativa subsp. japonica (Rice).